The sequence spans 430 residues: tRNA(Ile)-lysidine synthase (430 aa).

21-26 contributes to the ATP binding site; that stretch reads SGGLDS.

Belongs to the tRNA(Ile)-lysidine synthase family.

It localises to the cytoplasm. It catalyses the reaction cytidine(34) in tRNA(Ile2) + L-lysine + ATP = lysidine(34) in tRNA(Ile2) + AMP + diphosphate + H(+). In terms of biological role, ligates lysine onto the cytidine present at position 34 of the AUA codon-specific tRNA(Ile) that contains the anticodon CAU, in an ATP-dependent manner. Cytidine is converted to lysidine, thus changing the amino acid specificity of the tRNA from methionine to isoleucine. The sequence is that of tRNA(Ile)-lysidine synthase from Salmonella paratyphi A (strain ATCC 9150 / SARB42).